We begin with the raw amino-acid sequence, 83 residues long: Toxin TdNa3 (83 aa).

The signal sequence occupies residues 1-20 (MKGMIMLISCLMLIDVVVES). The region spanning 21–82 (KNGYIIEPKG…IFDYYNNKCG (62 aa)) is the LCN-type CS-alpha/beta domain. 4 cysteine pairs are disulfide-bonded: C31-C81, C35-C57, C43-C62, and C47-C64. The residue at position 81 (C81) is a Cysteine amide.

This sequence belongs to the long (4 C-C) scorpion toxin superfamily. Sodium channel inhibitor family. Beta subfamily. Expressed by the venom gland.

The protein localises to the secreted. Inhibits the sodium currents (Nav) in an apparent irreversible manner. Produces small depolarization and induces repetitive firing in squid axons. Is specific for arthropods (crickets, triatomides, crabs and squids), but is non-toxic to mice. This chain is Toxin TdNa3, found in Tityus discrepans (Venezuelan scorpion).